Consider the following 389-residue polypeptide: MVSVSEIRKAQRAEGPATILAIGTANPANCVEQSTYPDFYFKITNSEHKTELKEKFQRMCDKSMIKRRYMYLTEEILKENPNVCEYMAPSLDARQDMVVVEVPRLGKEAAVKAIKEWGQPKSKITHLIVCTTSGVDMPGADYQLTKLLGLRPYVKRYMMYQQGCFAGGTVLRLAKDLAENNKGARVLVVCSEVTAVTFRGPSDTHLDSLVGQALFGDGAAALIVGSDPVPEIEKPIFEMVWTAQTIAPDSEGAIDGHLREAGLTFHLLKDVPGIVSKNITKALVEAFEPLGISDYNSIFWIAHPGGPAILDQVEQKLALKPEKMNATREVLSEYGNMSSACVLFILDEMRKKSTQNGLKTTGEGLEWGVLFGFGPGLTIETVVLRSVAI.

A CoA-binding site is contributed by 55-62 (KFQRMCDK). Cysteine 164 functions as the Acyl-thioester intermediate in the catalytic mechanism. Residues threonine 197 and 216-217 (GD) each bind substrate. Alanine 308 serves as a coordination point for CoA.

The protein belongs to the thiolase-like superfamily. Chalcone/stilbene synthases family. In terms of assembly, homodimer.

It carries out the reaction (E)-4-coumaroyl-CoA + 3 malonyl-CoA + 3 H(+) = 2',4,4',6'-tetrahydroxychalcone + 3 CO2 + 4 CoA. The protein operates within secondary metabolite biosynthesis; flavonoid biosynthesis. Its function is as follows. The primary product of this enzyme is 4,2',4',6'-tetrahydroxychalcone (also termed naringenin-chalcone or chalcone) which can under specific conditions spontaneously isomerize into naringenin. The polypeptide is Chalcone synthase 2 (CHS2) (Medicago sativa (Alfalfa)).